An 862-amino-acid polypeptide reads, in one-letter code: DNA replication licensing factor MCM4 (862 aa).

Gly residues predominate over residues 1 to 12 (MASRGGGGGGDG). Positions 1–132 (MASRGGGGGG…GGGGGGAGAD (132 aa)) are disordered. Composition is skewed to low complexity over residues 20 to 41 (SSPD…PQSG) and 52 to 64 (SASP…SLGG). The C4-type zinc finger occupies 289–317 (CLVCGFYSEPVMVDRGRVTEPHICQKEQC). An MCM domain is found at 453–659 (IYDRLTRSLA…QTDRRLAKHI (207 aa)). 503 to 510 (GDPGTSKS) is a binding site for ATP. The short motif at 635–638 (SRFD) is the Arginine finger element.

It belongs to the MCM family. Component of the minichromosome maintenance (MCM) complex, a heterotetramer composed of MCM2, MCM3, MCM4, MCM5, MCM6 and MCM7.

Its subcellular location is the nucleus. The enzyme catalyses ATP + H2O = ADP + phosphate + H(+). Probable component of the MCM2-7 complex (MCM complex) that may function as a DNA helicase and which is essential to undergo a single round of replication initiation and elongation per cell cycle in eukaryotic cells. This is DNA replication licensing factor MCM4 (MCM4) from Oryza sativa subsp. japonica (Rice).